Here is a 91-residue protein sequence, read N- to C-terminus: Cell division topological specificity factor (91 aa).

This sequence belongs to the MinE family.

In terms of biological role, prevents the cell division inhibition by proteins MinC and MinD at internal division sites while permitting inhibition at polar sites. This ensures cell division at the proper site by restricting the formation of a division septum at the midpoint of the long axis of the cell. In Erwinia tasmaniensis (strain DSM 17950 / CFBP 7177 / CIP 109463 / NCPPB 4357 / Et1/99), this protein is Cell division topological specificity factor.